We begin with the raw amino-acid sequence, 362 residues long: Histidinol-phosphate aminotransferase (362 aa).

Lys218 carries the post-translational modification N6-(pyridoxal phosphate)lysine.

The protein belongs to the class-II pyridoxal-phosphate-dependent aminotransferase family. Histidinol-phosphate aminotransferase subfamily. As to quaternary structure, homodimer. Pyridoxal 5'-phosphate serves as cofactor.

It carries out the reaction L-histidinol phosphate + 2-oxoglutarate = 3-(imidazol-4-yl)-2-oxopropyl phosphate + L-glutamate. It functions in the pathway amino-acid biosynthesis; L-histidine biosynthesis; L-histidine from 5-phospho-alpha-D-ribose 1-diphosphate: step 7/9. The protein is Histidinol-phosphate aminotransferase of Xanthomonas campestris pv. campestris (strain B100).